Consider the following 278-residue polypeptide: Multidrug-efflux transporter 1 regulator (278 aa).

Residues 5-75 form the HTH merR-type domain; it reads YYSIGEVSKL…LEEMKKAQDL (71 aa). The H-T-H motif DNA-binding region spans 8 to 27; that stretch reads IGEVSKLANVSIKALRYYDK.

Binds DNA as a homodimer.

Activates transcription of the bmr gene in response to structurally dissimilar drugs. Binds rhodamine as an inducer. The protein is Multidrug-efflux transporter 1 regulator (bmrR) of Bacillus subtilis (strain 168).